Reading from the N-terminus, the 152-residue chain is 3-hydroxyacyl-[acyl-carrier-protein] dehydratase FabZ (152 aa).

H54 is an active-site residue.

The protein belongs to the thioester dehydratase family. FabZ subfamily.

The protein localises to the cytoplasm. It carries out the reaction a (3R)-hydroxyacyl-[ACP] = a (2E)-enoyl-[ACP] + H2O. Functionally, involved in unsaturated fatty acids biosynthesis. Catalyzes the dehydration of short chain beta-hydroxyacyl-ACPs and long chain saturated and unsaturated beta-hydroxyacyl-ACPs. This is 3-hydroxyacyl-[acyl-carrier-protein] dehydratase FabZ from Roseobacter denitrificans (strain ATCC 33942 / OCh 114) (Erythrobacter sp. (strain OCh 114)).